A 97-amino-acid chain; its full sequence is Small ribosomal subunit protein bS21 (97 aa).

The disordered stretch occupies residues 37–97; sequence EKPSVRKARE…APASSPTTTA (61 aa). Residues 76-97 are compositionally biased toward low complexity; that stretch reads RAVAPRRPAAAPAPASSPTTTA.

It belongs to the bacterial ribosomal protein bS21 family.

This Methylobacterium sp. (strain 4-46) protein is Small ribosomal subunit protein bS21.